The following is a 157-amino-acid chain: Transcription elongation factor GreA (157 aa).

Positions 17–37 form a coiled coil; sequence ELERLLKLRPQISEAIAEARE.

It belongs to the GreA/GreB family.

In terms of biological role, necessary for efficient RNA polymerase transcription elongation past template-encoded arresting sites. The arresting sites in DNA have the property of trapping a certain fraction of elongating RNA polymerases that pass through, resulting in locked ternary complexes. Cleavage of the nascent transcript by cleavage factors such as GreA or GreB allows the resumption of elongation from the new 3'terminus. GreA releases sequences of 2 to 3 nucleotides. This chain is Transcription elongation factor GreA, found in Vibrio parahaemolyticus serotype O3:K6 (strain RIMD 2210633).